We begin with the raw amino-acid sequence, 196 residues long: uncharacterized protein (196 aa).

Belongs to the flavoredoxin family. It depends on FMN as a cofactor.

This is an uncharacterized protein from Aquifex aeolicus (strain VF5).